The primary structure comprises 382 residues: Protein arginine N-methyltransferase PRMT10 (382 aa).

Residues 1–21 (MASLPNGAASASAASSAAGGG) form a disordered region. The segment covering 7–17 (GAASASAASSA) has biased composition (low complexity). Residues 28 to 359 (EVDFANYFCT…KENHRLMDME (332 aa)) enclose the SAM-dependent MTase PRMT-type domain. Catalysis depends on residues Glu-142 and Glu-151. The segment at 189-229 (ENKMEDLEIAMHDWNLFVEDTESYYGVNMNVLTKAYRAEHE) is dimerization arm.

The protein belongs to the class I-like SAM-binding methyltransferase superfamily. Protein arginine N-methyltransferase family. As to quaternary structure, ring-like homodimer.

The enzyme catalyses L-arginyl-[protein] + 2 S-adenosyl-L-methionine = N(omega),N(omega)-dimethyl-L-arginyl-[protein] + 2 S-adenosyl-L-homocysteine + 2 H(+). In terms of biological role, methylates (mono and asymmetric dimethylation) the guanidino nitrogens of arginyl residues in some proteins. The sequence is that of Protein arginine N-methyltransferase PRMT10 (PRMT10) from Oryza sativa subsp. indica (Rice).